We begin with the raw amino-acid sequence, 443 residues long: Signal recognition particle 54 kDa protein (443 aa).

GTP contacts are provided by residues 107-114 (GVQGSGKT), 189-193 (DTAGR), and 247-250 (TKLD).

This sequence belongs to the GTP-binding SRP family. SRP54 subfamily. Part of the signal recognition particle protein translocation system, which is composed of SRP and FtsY. Archaeal SRP consists of a 7S RNA molecule of 300 nucleotides and two protein subunits: SRP54 and SRP19.

Its subcellular location is the cytoplasm. The catalysed reaction is GTP + H2O = GDP + phosphate + H(+). Functionally, involved in targeting and insertion of nascent membrane proteins into the cytoplasmic membrane. Binds to the hydrophobic signal sequence of the ribosome-nascent chain (RNC) as it emerges from the ribosomes. The SRP-RNC complex is then targeted to the cytoplasmic membrane where it interacts with the SRP receptor FtsY. The chain is Signal recognition particle 54 kDa protein from Pyrococcus horikoshii (strain ATCC 700860 / DSM 12428 / JCM 9974 / NBRC 100139 / OT-3).